A 72-amino-acid chain; its full sequence is NAD(P)H-quinone oxidoreductase subunit O (72 aa).

Belongs to the complex I NdhO subunit family. In terms of assembly, NDH-1 can be composed of about 15 different subunits; different subcomplexes with different compositions have been identified which probably have different functions.

The protein localises to the cellular thylakoid membrane. It catalyses the reaction a plastoquinone + NADH + (n+1) H(+)(in) = a plastoquinol + NAD(+) + n H(+)(out). The enzyme catalyses a plastoquinone + NADPH + (n+1) H(+)(in) = a plastoquinol + NADP(+) + n H(+)(out). Functionally, NDH-1 shuttles electrons from an unknown electron donor, via FMN and iron-sulfur (Fe-S) centers, to quinones in the respiratory and/or the photosynthetic chain. The immediate electron acceptor for the enzyme in this species is believed to be plastoquinone. Couples the redox reaction to proton translocation, and thus conserves the redox energy in a proton gradient. Cyanobacterial NDH-1 also plays a role in inorganic carbon-concentration. The polypeptide is NAD(P)H-quinone oxidoreductase subunit O (Trichodesmium erythraeum (strain IMS101)).